We begin with the raw amino-acid sequence, 345 residues long: uncharacterized protein (345 aa).

It is found in the cell membrane. In terms of biological role, involved in potassium and divalent cation transport. Enhances the transport activity of the cation/potassium transporter CzcD. This is an uncharacterized protein from Bacillus velezensis (strain DSM 23117 / BGSC 10A6 / LMG 26770 / FZB42) (Bacillus amyloliquefaciens subsp. plantarum).